Here is a 436-residue protein sequence, read N- to C-terminus: GTPase Der (436 aa).

EngA-type G domains are found at residues 4 to 167 and 176 to 351; these read PIVA…NKES and IRLS…ENHK. GTP-binding positions include 10-17, 57-61, 119-122, 182-189, 229-233, and 294-297; these read GKPNVGKS, DTGGI, NKVD, GRPNVGKS, DTAGM, and NKWD. The 85-residue stretch at 352-436 folds into the KH-like domain; that stretch reads KRVQSSTLNE…PIHIIPRKRN (85 aa).

It belongs to the TRAFAC class TrmE-Era-EngA-EngB-Septin-like GTPase superfamily. EngA (Der) GTPase family. Associates with the 50S ribosomal subunit.

Its function is as follows. GTPase that plays an essential role in the late steps of ribosome biogenesis. This chain is GTPase Der, found in Staphylococcus epidermidis (strain ATCC 35984 / DSM 28319 / BCRC 17069 / CCUG 31568 / BM 3577 / RP62A).